The sequence spans 345 residues: S-adenosylmethionine:tRNA ribosyltransferase-isomerase (345 aa).

It belongs to the QueA family. In terms of assembly, monomer.

The protein localises to the cytoplasm. The catalysed reaction is 7-aminomethyl-7-carbaguanosine(34) in tRNA + S-adenosyl-L-methionine = epoxyqueuosine(34) in tRNA + adenine + L-methionine + 2 H(+). It participates in tRNA modification; tRNA-queuosine biosynthesis. In terms of biological role, transfers and isomerizes the ribose moiety from AdoMet to the 7-aminomethyl group of 7-deazaguanine (preQ1-tRNA) to give epoxyqueuosine (oQ-tRNA). The chain is S-adenosylmethionine:tRNA ribosyltransferase-isomerase from Anaeromyxobacter dehalogenans (strain 2CP-1 / ATCC BAA-258).